The following is a 405-amino-acid chain: Acetate kinase (405 aa).

Residue asparagine 7 participates in Mg(2+) binding. Lysine 14 serves as a coordination point for ATP. Arginine 90 lines the substrate pocket. Residue aspartate 147 is the Proton donor/acceptor of the active site. ATP-binding positions include 207-211 (HLGNG), 282-284 (DMR), and 330-334 (GVGEN). Glutamate 383 lines the Mg(2+) pocket.

Belongs to the acetokinase family. As to quaternary structure, homodimer. The cofactor is Mg(2+). Mn(2+) is required as a cofactor.

It localises to the cytoplasm. It carries out the reaction acetate + ATP = acetyl phosphate + ADP. The protein operates within metabolic intermediate biosynthesis; acetyl-CoA biosynthesis; acetyl-CoA from acetate: step 1/2. Catalyzes the formation of acetyl phosphate from acetate and ATP. Can also catalyze the reverse reaction. The protein is Acetate kinase of Pseudothermotoga lettingae (strain ATCC BAA-301 / DSM 14385 / NBRC 107922 / TMO) (Thermotoga lettingae).